Here is a 159-residue protein sequence, read N- to C-terminus: Ribosomal RNA large subunit methyltransferase H (159 aa).

Residues L76, G108, and 127–132 (FSKMTL) contribute to the S-adenosyl-L-methionine site.

The protein belongs to the RNA methyltransferase RlmH family. As to quaternary structure, homodimer.

Its subcellular location is the cytoplasm. The catalysed reaction is pseudouridine(1915) in 23S rRNA + S-adenosyl-L-methionine = N(3)-methylpseudouridine(1915) in 23S rRNA + S-adenosyl-L-homocysteine + H(+). Its function is as follows. Specifically methylates the pseudouridine at position 1915 (m3Psi1915) in 23S rRNA. The polypeptide is Ribosomal RNA large subunit methyltransferase H (Bacillus cereus (strain ATCC 10987 / NRS 248)).